Reading from the N-terminus, the 212-residue chain is Uracil phosphoribosyltransferase (212 aa).

5-phospho-alpha-D-ribose 1-diphosphate-binding positions include Arg78, Arg103, and Asp130–Ser138. Uracil is bound by residues Ile193 and Gly198 to Ala200. Asp199 is a binding site for 5-phospho-alpha-D-ribose 1-diphosphate.

This sequence belongs to the UPRTase family. The cofactor is Mg(2+).

It carries out the reaction UMP + diphosphate = 5-phospho-alpha-D-ribose 1-diphosphate + uracil. It participates in pyrimidine metabolism; UMP biosynthesis via salvage pathway; UMP from uracil: step 1/1. With respect to regulation, allosterically activated by GTP. Functionally, catalyzes the conversion of uracil and 5-phospho-alpha-D-ribose 1-diphosphate (PRPP) to UMP and diphosphate. This is Uracil phosphoribosyltransferase from Pseudomonas entomophila (strain L48).